A 400-amino-acid chain; its full sequence is Cell division protein FtsZ 2 (400 aa).

Basic and acidic residues predominate over residues M1–R16. The disordered stretch occupies residues M1 to G30. Residues G41 to N45, G128 to G130, E159, R162, and D205 contribute to the GTP site. The interval V338–R400 is disordered. The span at Q352–S364 shows a compositional bias: low complexity. Residues G365–W382 show a composition bias toward polar residues. Residues G385–R400 are compositionally biased toward basic and acidic residues.

This sequence belongs to the FtsZ family. In terms of assembly, homodimer. Polymerizes to form a dynamic ring structure in a strictly GTP-dependent manner. Interacts directly with several other division proteins. Interacts with SepF.

It is found in the cytoplasm. In terms of biological role, essential cell division protein that forms a contractile ring structure (Z ring) at the future cell division site. The regulation of the ring assembly controls the timing and the location of cell division. One of the functions of the FtsZ ring is to recruit other cell division proteins to the septum to produce a new cell wall between the dividing cells. Binds GTP and shows GTPase activity. Required for division ring constriction. This chain is Cell division protein FtsZ 2, found in Haloferax volcanii (strain ATCC 29605 / DSM 3757 / JCM 8879 / NBRC 14742 / NCIMB 2012 / VKM B-1768 / DS2) (Halobacterium volcanii).